Reading from the N-terminus, the 449-residue chain is N-succinylarginine dihydrolase (449 aa).

Substrate is bound by residues G19–S28, N110, and H137–R138. The disordered stretch occupies residues Y23 to R43. The segment covering A27 to N37 has biased composition (low complexity). Residue E174 is part of the active site. R214 lines the substrate pocket. The active site involves H250. Residues D252 and N365 each coordinate substrate. C371 acts as the Nucleophile in catalysis.

It belongs to the succinylarginine dihydrolase family. In terms of assembly, homodimer.

It catalyses the reaction N(2)-succinyl-L-arginine + 2 H2O + 2 H(+) = N(2)-succinyl-L-ornithine + 2 NH4(+) + CO2. Its pathway is amino-acid degradation; L-arginine degradation via AST pathway; L-glutamate and succinate from L-arginine: step 2/5. Its function is as follows. Catalyzes the hydrolysis of N(2)-succinylarginine into N(2)-succinylornithine, ammonia and CO(2). In Pseudomonas putida (strain ATCC 47054 / DSM 6125 / CFBP 8728 / NCIMB 11950 / KT2440), this protein is N-succinylarginine dihydrolase.